Consider the following 94-residue polypeptide: Small ribosomal subunit protein bS6 (94 aa).

Belongs to the bacterial ribosomal protein bS6 family.

Its function is as follows. Binds together with bS18 to 16S ribosomal RNA. This chain is Small ribosomal subunit protein bS6, found in Clostridium botulinum (strain Loch Maree / Type A3).